A 367-amino-acid polypeptide reads, in one-letter code: Histidinol-phosphate aminotransferase (367 aa).

K221 carries the post-translational modification N6-(pyridoxal phosphate)lysine.

This sequence belongs to the class-II pyridoxal-phosphate-dependent aminotransferase family. Histidinol-phosphate aminotransferase subfamily. In terms of assembly, homodimer. The cofactor is pyridoxal 5'-phosphate.

The catalysed reaction is L-histidinol phosphate + 2-oxoglutarate = 3-(imidazol-4-yl)-2-oxopropyl phosphate + L-glutamate. It participates in amino-acid biosynthesis; L-histidine biosynthesis; L-histidine from 5-phospho-alpha-D-ribose 1-diphosphate: step 7/9. In Paracoccus denitrificans (strain Pd 1222), this protein is Histidinol-phosphate aminotransferase.